The chain runs to 452 residues: Lamina-associated polypeptide 2, isoform beta (452 aa).

The tract at residues 1-409 is nucleoplasmic; that stretch reads MPEFLEDPSV…KSEKTKKGRS (409 aa). One can recognise an LEM-like domain in the interval 5 to 48; sequence LEDPSVLTKDKLKSELVANNVTLPAGEQRKDVYVQLYLQHLTAR. Disordered regions lie at residues 48–113 and 149–264; these read RNRP…DVTE and REQG…VEPS. The interval 49–107 is linker; the sequence is NRPPLAAGANSKGPPDFSSDEEREPTPVLGSGASVGRGRGAVGRKATKKTDKPRPEDKD. Residues S66 and S67 each carry the phosphoserine modification. Residue T74 is modified to Phosphothreonine. Phosphoserine is present on S82. Omega-N-methylarginine occurs at positions 85 and 87. The span at 96–105 shows a compositional bias: basic and acidic residues; it reads KKTDKPRPED. Residues 108–152 enclose the LEM domain; the sequence is DLDVTELSNEELLEQLVRYGVNPGPIVGTTRKLYEKKLLKLREQG. The interval 137–242 is NAKAP95-binding N; sequence TRKLYEKKLL…TSGSSKGGPL (106 aa). Residues 154 to 177 show a composition bias toward polar residues; sequence ESRSSTPLPTVSSSAENTRQNGSN. S155 and S158 each carry phosphoserine. T159 is modified (phosphothreonine). Residues S165, S167, S176, S179, and S183 each carry the phosphoserine modification. A compositionally biased stretch (basic and acidic residues) spans 178–202; the sequence is DSDRYSDNDEDSKIELKLEKREPLK. K206 is modified (N6-acetyllysine). Positions 298–370 are binds lamins B; it reads TGNFKHASSI…SCRRPIKGAA (73 aa). The segment at 299 to 373 is NAKAP95-binding C; the sequence is GNFKHASSIL…RPIKGAAGRP (75 aa). Phosphoserine occurs at positions 305, 306, and 361. An N6-acetyllysine modification is found at K388. The helical; Signal-anchor for type II membrane protein transmembrane segment at 410-430 threads the bilayer; that stretch reads VPMWIKMLLFALVAGFLFLVY. The Lumenal segment spans residues 431 to 452; sequence QAMETNQGNPFTNFLQDTKISN.

The protein belongs to the LEM family. As to quaternary structure, interacts with LMNB1, LMNB2, BANF1, AKAP8L, GMCL and chromosomes. Mitosis-specific phosphorylation specifically abolishes its binding to lamin B and chromosomes.

The protein localises to the nucleus inner membrane. The protein resides in the chromosome. In terms of biological role, binds directly to lamin B1 and chromosomes in a mitotic phosphorylation-regulated manner. May play an important role in nuclear envelope reassembly at the end of mitosis and/or anchoring of the nuclear lamina and interphase chromosomes to the nuclear envelope. The sequence is that of Lamina-associated polypeptide 2, isoform beta (Tmpo) from Rattus norvegicus (Rat).